We begin with the raw amino-acid sequence, 223 residues long: Ion-translocating oxidoreductase complex subunit E (223 aa).

The next 7 helical transmembrane spans lie at 17-37, 38-58, 68-88, 91-111, 124-144, 156-176, and 181-201; these read SLVQ…TINA, IGLG…ISIL, IPIY…LLHA, FNLY…CIVV, VISF…MFVI, FLFG…FTFI, and TIIL…VIAF.

This sequence belongs to the NqrDE/RnfAE family. In terms of assembly, the complex is composed of six subunits: RnfA, RnfB, RnfC, RnfD, RnfE and RnfG.

The protein localises to the cell inner membrane. Part of a membrane-bound complex that couples electron transfer with translocation of ions across the membrane. The protein is Ion-translocating oxidoreductase complex subunit E of Buchnera aphidicola subsp. Schizaphis graminum (strain Sg).